The sequence spans 540 residues: MTLNSLPAWTALQSHFEQIRHARLRDWFAPQNDPAPTRAERFTFSGGGLAADFSKNRITDETLRLLVQLAREARVEARRDAMFAGEIVNPTEGRAALHTALRATDPHAPFHAQVSAERAKMATFARAVRNGTWTGHTGKRIRHVINIGIGGSDLGPKMVTHALRHVATRDISMHFVSNVDGADLARVLEQVDPEETLAIVVSKTFTTLETMTNARSLRDWFVAKGCPEDALAKHFVGVSANPAEVVKFGIAADNVFEMWDWVGGRYSLWSAVGLSIMIAIGPEQFDELLAGANDMDRHFREAPLERNLPVLLGLIGIWYRNFFGSQSYLVAPYSEALHYLPSYLQQLEMESNGKSARLDGRFVDYPTAAVTWGEPGTNGQHAFFQMLHQGPTIVPIDFIAVLTPEHPLASHHPKLLANCFAQSEALMLGRTLEEARKVAGPGKEDLAPHLTFPGNRPTTTLLVDALTPRSLGALIALYEHKVLVQATVWDINPFDQWGVELGKILGKVVEADLAADALDTAKHDSSTTALIARARAALKR.

E350 serves as the catalytic Proton donor. Active-site residues include H381 and K503.

This sequence belongs to the GPI family.

The protein localises to the cytoplasm. It carries out the reaction alpha-D-glucose 6-phosphate = beta-D-fructose 6-phosphate. The protein operates within carbohydrate biosynthesis; gluconeogenesis. Its pathway is carbohydrate degradation; glycolysis; D-glyceraldehyde 3-phosphate and glycerone phosphate from D-glucose: step 2/4. In terms of biological role, catalyzes the reversible isomerization of glucose-6-phosphate to fructose-6-phosphate. This Burkholderia multivorans (strain ATCC 17616 / 249) protein is Glucose-6-phosphate isomerase.